Here is a 374-residue protein sequence, read N- to C-terminus: uncharacterized protein (374 aa).

This sequence belongs to the mimivirus R640 family.

It localises to the virion. This is an uncharacterized protein from Acanthamoeba polyphaga (Amoeba).